A 487-amino-acid polypeptide reads, in one-letter code: Kynureninase 1 (487 aa).

Residues Leu-149, Thr-150, 177–180 (FPSD), Ser-234, Asp-263, His-266, and Tyr-288 contribute to the pyridoxal 5'-phosphate site. Position 289 is an N6-(pyridoxal phosphate)lysine (Lys-289). Residues Trp-329 and Asn-357 each contribute to the pyridoxal 5'-phosphate site.

The protein belongs to the kynureninase family. Homodimer. The cofactor is pyridoxal 5'-phosphate.

Its subcellular location is the cytoplasm. It carries out the reaction L-kynurenine + H2O = anthranilate + L-alanine + H(+). The enzyme catalyses 3-hydroxy-L-kynurenine + H2O = 3-hydroxyanthranilate + L-alanine + H(+). The protein operates within amino-acid degradation; L-kynurenine degradation; L-alanine and anthranilate from L-kynurenine: step 1/1. Its pathway is cofactor biosynthesis; NAD(+) biosynthesis; quinolinate from L-kynurenine: step 2/3. Catalyzes the cleavage of L-kynurenine (L-Kyn) and L-3-hydroxykynurenine (L-3OHKyn) into anthranilic acid (AA) and 3-hydroxyanthranilic acid (3-OHAA), respectively. The protein is Kynureninase 1 (bna5-1) of Emericella nidulans (strain FGSC A4 / ATCC 38163 / CBS 112.46 / NRRL 194 / M139) (Aspergillus nidulans).